A 474-amino-acid polypeptide reads, in one-letter code: Ribosomal RNA small subunit methyltransferase F (474 aa).

Residues 121 to 127, Glu-145, Asp-172, and Asp-190 each bind S-adenosyl-L-methionine; that span reads ASAPGSK. Cys-243 functions as the Nucleophile in the catalytic mechanism.

The protein belongs to the class I-like SAM-binding methyltransferase superfamily. RsmB/NOP family.

It localises to the cytoplasm. It carries out the reaction cytidine(1407) in 16S rRNA + S-adenosyl-L-methionine = 5-methylcytidine(1407) in 16S rRNA + S-adenosyl-L-homocysteine + H(+). Specifically methylates the cytosine at position 1407 (m5C1407) of 16S rRNA. The polypeptide is Ribosomal RNA small subunit methyltransferase F (Shewanella piezotolerans (strain WP3 / JCM 13877)).